The chain runs to 216 residues: Thymidine kinase (216 aa).

ATP-binding positions include 9–16 and 86–89; these read GPMDSGKS and DEAQ. Glu-87 serves as the catalytic Proton acceptor.

It belongs to the thymidine kinase family. In terms of assembly, homotetramer.

The protein localises to the cytoplasm. It carries out the reaction thymidine + ATP = dTMP + ADP + H(+). This Cutibacterium acnes (strain DSM 16379 / KPA171202) (Propionibacterium acnes) protein is Thymidine kinase.